The sequence spans 259 residues: Small ribosomal subunit protein uS2 (259 aa).

This sequence belongs to the universal ribosomal protein uS2 family.

This chain is Small ribosomal subunit protein uS2, found in Streptococcus pneumoniae (strain Hungary19A-6).